Reading from the N-terminus, the 107-residue chain is Transcriptional regulator Rv3488 (107 aa).

Cd(2+)-binding residues include His16, Glu30, His34, and His101.

As to quaternary structure, homodimer.

Its function is as follows. May have transcription regulation and metal-detoxifying functions through which it may enhance intracellular survival of mycobacteria. Binds to its own promoter region and to the Rv1999c promoter region. It displays strong affinity for cadmium ions, but can also bind zinc, manganese and nickel. Expression increases the intracellular survival of recombinant M.smegmatis in murine macrophage cell line and increases its tolerance to cadmium ions. The protein is Transcriptional regulator Rv3488 of Mycobacterium tuberculosis (strain ATCC 25618 / H37Rv).